Here is a 128-residue protein sequence, read N- to C-terminus: Aspartate 1-decarboxylase (128 aa).

The active-site Schiff-base intermediate with substrate; via pyruvic acid is Ser25. Residue Ser25 is modified to Pyruvic acid (Ser). A substrate-binding site is contributed by Thr57. Catalysis depends on Tyr58, which acts as the Proton donor. 73-75 lines the substrate pocket; that stretch reads GSA.

This sequence belongs to the PanD family. Heterooctamer of four alpha and four beta subunits. Requires pyruvate as cofactor. In terms of processing, is synthesized initially as an inactive proenzyme, which is activated by self-cleavage at a specific serine bond to produce a beta-subunit with a hydroxyl group at its C-terminus and an alpha-subunit with a pyruvoyl group at its N-terminus.

The protein localises to the cytoplasm. It carries out the reaction L-aspartate + H(+) = beta-alanine + CO2. It functions in the pathway cofactor biosynthesis; (R)-pantothenate biosynthesis; beta-alanine from L-aspartate: step 1/1. Functionally, catalyzes the pyruvoyl-dependent decarboxylation of aspartate to produce beta-alanine. The chain is Aspartate 1-decarboxylase from Burkholderia pseudomallei (strain 668).